Here is a 239-residue protein sequence, read N- to C-terminus: MPIKKPCLKLNLDSLNVVRSEIPQMLSANERLKNNFNILYNQIRQYPAYYFKVASNVPTYSDICQFFSVMYQGFQIVNHSGDVFIHACRENPQSKGDFVGDKFHISIAREQVPLAFQILSGLLFSEDSPIDKWKITDMNRVSQQSRVGIGAQFTLYVKSDQECSQYSALLLHKIRQFIMCLESNLLRSKIAPGEYPASDVRPEDWKYVSYRNELRSDRDGSERQEQMLREEPFYRLMIE.

The active-site Proton donor is histidine 104. The Proton acceptor role is filled by lysine 134.

It belongs to the phosphothreonine lyase family.

The protein localises to the secreted. In terms of biological role, catalyzes the removal of the phosphate group from the phosphothreonine in the mitogen-activated protein kinases p38, phosphothreonine in the mitogen-activated protein kinases such as MAPK2/ERK2, MAPK3/ERK1, MAPK8 and MAPK14 in an irreversible reaction, thus preventing the downstream phosphorylation of histone H3. This epigenetic modification results in inhibition of the transcription of a specific subset of pro-inflammatory genes, and ultimately to a reduced immune response against the invading pathogen. The diminished immune response enhances the bacterium's ability to disseminate and multiply within the host. The polypeptide is Phosphothreonine lyase OspF (ospF) (Shigella boydii serotype 4 (strain Sb227)).